The primary structure comprises 170 residues: Small ribosomal subunit protein uS3mA (170 aa).

The transit peptide at 1–30 directs the protein to the mitochondrion; it reads MAAPVMSALGRLQGLIRTERSLLTHVQSRC.

The protein belongs to the universal ribosomal protein uS3 family. Component of the mitochondrial ribosome small subunit (28S) which comprises a 12S rRNA and about 30 distinct proteins.

It is found in the mitochondrion. In Xenopus laevis (African clawed frog), this protein is Small ribosomal subunit protein uS3mA (mrps24-a).